The primary structure comprises 178 residues: MDLPGPIHDFILVFLGSGLILGGLGVVLFTNPIYSAFSLGLVLVCISLFYILSNSHFVAAAQLLIYVGAVNVLIIFAVMFMNGSDYSKDFQLNLWTIGDGLTSLVCTSIFFSLITTILDTSWYGIIWTTRANQIIEQDLISNSQQIGIHLSTDFFLPFELVSIILLVALIGAIAVARQ.

Helical transmembrane passes span 10–30 (FILVFLGSGLILGGLGVVLFT), 32–52 (PIYSAFSLGLVLVCISLFYIL), 61–81 (AQLLIYVGAVNVLIIFAVMFM), 94–114 (LWTIGDGLTSLVCTSIFFSLI), and 154–174 (FFLPFELVSIILLVALIGAIA).

The protein belongs to the complex I subunit 6 family. In terms of assembly, NDH is composed of at least 16 different subunits, 5 of which are encoded in the nucleus.

It localises to the plastid. The protein localises to the chloroplast thylakoid membrane. The catalysed reaction is a plastoquinone + NADH + (n+1) H(+)(in) = a plastoquinol + NAD(+) + n H(+)(out). The enzyme catalyses a plastoquinone + NADPH + (n+1) H(+)(in) = a plastoquinol + NADP(+) + n H(+)(out). NDH shuttles electrons from NAD(P)H:plastoquinone, via FMN and iron-sulfur (Fe-S) centers, to quinones in the photosynthetic chain and possibly in a chloroplast respiratory chain. The immediate electron acceptor for the enzyme in this species is believed to be plastoquinone. Couples the redox reaction to proton translocation, and thus conserves the redox energy in a proton gradient. The chain is NAD(P)H-quinone oxidoreductase subunit 6, chloroplastic (ndhG) from Citrus sinensis (Sweet orange).